Reading from the N-terminus, the 828-residue chain is MKLSRRSFMKANAVAAAAAAAGLSVPGVARAVVGQQEAIKWDKAPCRFCGTGCGVLVGTQQGRVVACQGDPDAPVNRGLNCIKGYFLPKIMYGKDRLTQPLLRMKNGKYDKEGEFTPITWDQAFDVMEEKFKTALKEKGPESIGMFGSGQWTIWEGYAASKLFKAGFRSNNIDPNARHCMASAVVGFMRTFGMDEPMGCYDDIEQADAFVLWGANMAEMHPILWSRITNRRLSNQNVTVAVLSTYQHRSFELADNGIIFTPQSDLVILNYIANYIIQNNAINQDFFSKHVNLRKGATDIGYGLRPTHPLEKAAKNPGSDASEPMSFEDYKAFVAEYTLEKTAEMTGVPKDQLEQLAQLYADPNKKVISYWTMGFNQHTRGVWANNLVYNLHLLTGKISQPGCGPFSLTGQPSACGTAREVGTFAHRLPADMVVTNEKHRDICEKKWNIPSGTIPAKIGLHAVAQDRALKDGKLNVYWTMCTNNMQAGPNINEERMPGWRDPRNFIIVSDPYPTVSALAADLILPTAMWVEKEGAYGNAERRTQFWRQQVQAPGEAKSDLWQLVQFSRRFKTEEVWPEELLAKKPELRGKTLYEVLYATPEVSKFPLSELAEDQLNDESRELGFYLQKGLFEEYAWFGRGHGHDLAPFDDYHKARGLRWPVVNGKETQWRYSEGNDPYVKAGEGYKFYGKPDGKAVIFALPFEPAAEAPDEEYDLWLSTGRVLEHWHTGSMTRRVPELHRAFPEAVLFIHPLDAKARDLRRGDKVKVVSRRGEVISIVETRGRNRPPQGLVYMPFFDAAQLVNKLTLDATDPLSKETDFKKCAVKLEKV.

Positions 1 to 31 form a signal peptide, tat-type signal; that stretch reads MKLSRRSFMKANAVAAAAAAAGLSVPGVARA. The region spanning 39-95 is the 4Fe-4S Mo/W bis-MGD-type domain; that stretch reads IKWDKAPCRFCGTGCGVLVGTQQGRVVACQGDPDAPVNRGLNCIKGYFLPKIMYGKD. 4 residues coordinate [4Fe-4S] cluster: cysteine 46, cysteine 49, cysteine 53, and cysteine 81. Mo-bis(molybdopterin guanine dinucleotide) contacts are provided by residues lysine 83, glutamine 150, asparagine 175, cysteine 179, 212 to 219, 243 to 247, 262 to 264, methionine 372, glutamine 376, asparagine 482, 508 to 509, lysine 531, aspartate 558, and 718 to 727; these read WGANMAEM, STYQH, QSD, SD, and TGRVLEHWHT. Phenylalanine 794 is a substrate binding site. The Mo-bis(molybdopterin guanine dinucleotide) site is built by asparagine 802 and lysine 819.

It belongs to the prokaryotic molybdopterin-containing oxidoreductase family. NasA/NapA/NarB subfamily. As to quaternary structure, component of the periplasmic nitrate reductase NapAB complex composed of NapA and NapB. [4Fe-4S] cluster is required as a cofactor. Mo-bis(molybdopterin guanine dinucleotide) serves as cofactor. In terms of processing, predicted to be exported by the Tat system. The position of the signal peptide cleavage has not been experimentally proven.

The protein resides in the periplasm. The catalysed reaction is 2 Fe(II)-[cytochrome] + nitrate + 2 H(+) = 2 Fe(III)-[cytochrome] + nitrite + H2O. Functionally, catalytic subunit of the periplasmic nitrate reductase complex NapAB. Receives electrons from NapB and catalyzes the reduction of nitrate to nitrite. This is Periplasmic nitrate reductase from Escherichia coli O6:K15:H31 (strain 536 / UPEC).